A 178-amino-acid chain; its full sequence is Thioredoxin F1, chloroplastic (178 aa).

Positions 1–22 are disordered; it reads MPLSLRLSPSPTALSPTTGGFG. Residues 1-57 constitute a chloroplast transit peptide; that stretch reads MPLSLRLSPSPTALSPTTGGFGPSRKQCRIPYSGVPTTKIGFCSLDSRKRGDSSVVR. The span at 7 to 18 shows a compositional bias: polar residues; that stretch reads LSPSPTALSPTT. A Thioredoxin domain is found at 58-174; it reads CSLETVNVSV…LVAAIETARS (117 aa). Catalysis depends on nucleophile residues cysteine 99 and cysteine 102. A disulfide bridge connects residues cysteine 99 and cysteine 102. The residue at position 126 (cysteine 126) is an S-glutathionyl cysteine; transient.

This sequence belongs to the thioredoxin family. Plant F-type subfamily. Post-translationally, glutathionylation at Cys-126 decreases its ability to be reduced by ferredoxin-thioredoxin reductase and reduces its efficiency in activating target chloroplastic enzymes.

It localises to the plastid. Its subcellular location is the chloroplast stroma. Its function is as follows. Thiol-disulfide oxidoreductase involved in the redox regulation of enzymes of both reductive pentose phosphate pathway (Calvin-Benson cycle) and oxidative pentose phosphate pathway. Under light or reducing conditions, activates in chloroplast the glyceraldehyde-3-phosphate dehydrogenase, the phosphoribulokinase and the fructose-1,6-bisphosphate phosphatase, and inhibits the glucose-6-phosphate dehydrogenase. The chain is Thioredoxin F1, chloroplastic from Arabidopsis thaliana (Mouse-ear cress).